The chain runs to 304 residues: PHO85 cyclin-9 (304 aa).

The Cyclin N-terminal domain occupies 19-146; the sequence is EMIQFLATST…LLEYLNWDVR (128 aa).

The protein belongs to the cyclin family. PCL1,2 subfamily. As to quaternary structure, forms a cyclin-CDK complex with PHO85.

Functionally, m/G1-specific cyclin partner of the cyclin-dependent kinase (CDK) PHO85. May have a role in bud site selection in G1 phase. The sequence is that of PHO85 cyclin-9 (PCL9) from Saccharomyces cerevisiae (strain ATCC 204508 / S288c) (Baker's yeast).